The primary structure comprises 132 residues: Transcription antitermination protein NusB (132 aa).

It belongs to the NusB family.

In terms of biological role, involved in transcription antitermination. Required for transcription of ribosomal RNA (rRNA) genes. Binds specifically to the boxA antiterminator sequence of the ribosomal RNA (rrn) operons. This Campylobacter lari (strain RM2100 / D67 / ATCC BAA-1060) protein is Transcription antitermination protein NusB.